The chain runs to 271 residues: Tryptophan synthase alpha chain (271 aa).

Residues E49 and D60 each act as proton acceptor in the active site.

The protein belongs to the TrpA family. In terms of assembly, tetramer of two alpha and two beta chains.

It carries out the reaction (1S,2R)-1-C-(indol-3-yl)glycerol 3-phosphate + L-serine = D-glyceraldehyde 3-phosphate + L-tryptophan + H2O. It functions in the pathway amino-acid biosynthesis; L-tryptophan biosynthesis; L-tryptophan from chorismate: step 5/5. The alpha subunit is responsible for the aldol cleavage of indoleglycerol phosphate to indole and glyceraldehyde 3-phosphate. The polypeptide is Tryptophan synthase alpha chain (Aromatoleum aromaticum (strain DSM 19018 / LMG 30748 / EbN1) (Azoarcus sp. (strain EbN1))).